We begin with the raw amino-acid sequence, 108 residues long: MQTKKYHVAKGDTVMVIAGKEKAKTGKVLQVLPKKDAVIVEGLNMVKRHVRARGNEPGGITEKEAALHVSNVQLYCTKCVKPVRTRIKVLENGEKQRTCVKCDSSLEN.

Belongs to the universal ribosomal protein uL24 family. As to quaternary structure, part of the 50S ribosomal subunit.

Functionally, one of two assembly initiator proteins, it binds directly to the 5'-end of the 23S rRNA, where it nucleates assembly of the 50S subunit. One of the proteins that surrounds the polypeptide exit tunnel on the outside of the subunit. The polypeptide is Large ribosomal subunit protein uL24 (Trichlorobacter lovleyi (strain ATCC BAA-1151 / DSM 17278 / SZ) (Geobacter lovleyi)).